Here is a 584-residue protein sequence, read N- to C-terminus: Eukaryotic translation initiation factor 3 subunit D (584 aa).

Residues isoleucine 118–arginine 184 are disordered. The span at glycine 127–alanine 167 shows a compositional bias: gly residues. The segment covering glycine 173–arginine 184 has biased composition (basic and acidic residues). An RNA gate region spans residues alanine 312 to proline 326. The segment at proline 563–aspartate 584 is disordered. The span at leucine 567–aspartate 584 shows a compositional bias: acidic residues.

Belongs to the eIF-3 subunit D family. In terms of assembly, component of the eukaryotic translation initiation factor 3 (eIF-3) complex.

The protein resides in the cytoplasm. MRNA cap-binding component of the eukaryotic translation initiation factor 3 (eIF-3) complex, which is involved in protein synthesis of a specialized repertoire of mRNAs and, together with other initiation factors, stimulates binding of mRNA and methionyl-tRNAi to the 40S ribosome. The eIF-3 complex specifically targets and initiates translation of a subset of mRNAs involved in cell proliferation. In the eIF-3 complex, eif3d specifically recognizes and binds the 7-methylguanosine cap of a subset of mRNAs. The chain is Eukaryotic translation initiation factor 3 subunit D from Chaetomium globosum (strain ATCC 6205 / CBS 148.51 / DSM 1962 / NBRC 6347 / NRRL 1970) (Soil fungus).